Here is a 162-residue protein sequence, read N- to C-terminus: Large ribosomal subunit protein uL10 (162 aa).

The protein belongs to the universal ribosomal protein uL10 family. In terms of assembly, part of the ribosomal stalk of the 50S ribosomal subunit. The N-terminus interacts with L11 and the large rRNA to form the base of the stalk. The C-terminus forms an elongated spine to which L12 dimers bind in a sequential fashion forming a multimeric L10(L12)X complex.

In terms of biological role, forms part of the ribosomal stalk, playing a central role in the interaction of the ribosome with GTP-bound translation factors. This chain is Large ribosomal subunit protein uL10, found in Acholeplasma laidlawii (strain PG-8A).